The sequence spans 972 residues: Coatomer subunit beta (972 aa).

HEAT repeat units lie at residues 79 to 113, 133 to 170, 317 to 354, 397 to 434, and 481 to 518; these read LLYFYWEIVPKLDQDGKLRHEMILVCNAIQHDLQH, ELLEQMVPSTLACLEYRHAYVRKYAILAVLSIYKVSEH, GCLEELTLDILRVLNAEDIDVRSKALTIAMDLVTSRNI, EIAANIVSLLLDFITDLNSVAANGVIAFVKDVVELYPQ, and RQSIGEIPILQTELKNQRKSQDEDDEATEESATKQAGP. The segment at 494 to 522 is disordered; it reads LKNQRKSQDEDDEATEESATKQAGPVILP.

Oligomeric complex that consists of at least the alpha, beta, beta', gamma, delta, epsilon and zeta subunits.

Its subcellular location is the cytoplasm. The protein localises to the golgi apparatus membrane. It localises to the cytoplasmic vesicle. It is found in the COPI-coated vesicle membrane. Its function is as follows. The coatomer is a cytosolic protein complex that binds to dilysine motifs and reversibly associates with Golgi non-clathrin-coated vesicles, which further mediate biosynthetic protein transport from the ER, via the Golgi up to the trans Golgi network. Coatomer complex is required for budding from Golgi membranes, and is essential for the retrograde Golgi-to-ER transport of dilysine-tagged proteins. In Candida glabrata (strain ATCC 2001 / BCRC 20586 / JCM 3761 / NBRC 0622 / NRRL Y-65 / CBS 138) (Yeast), this protein is Coatomer subunit beta.